The chain runs to 1164 residues: Hamartin (1164 aa).

Lysine 30 participates in a covalent cross-link: Glycyl lysine isopeptide (Lys-Gly) (interchain with G-Cter in ubiquitin). Residues 403-787 (SDDYVHISLP…QIRQLQHDRE (385 aa)) are mediates interaction with WDR45B. The segment at 439 to 571 (LNDRGSEEPP…ADESPAGDRE (133 aa)) is disordered. Positions 474-487 (EKDKEEAAISRELS) are enriched in basic and acidic residues. 5 positions are modified to phosphoserine: serine 487, serine 505, serine 511, serine 521, and serine 598. Residues 513–530 (PGSQRKTHSAASSSQGAS) are compositionally biased toward polar residues. Residues 721–997 (RKVIKAAALE…AAEERLDCCN (277 aa)) adopt a coiled-coil conformation. The disordered stretch occupies residues 1006 to 1085 (GHNEEASGHN…TTVGSLPSSK (80 aa)). Positions 1007 to 1020 (HNEEASGHNGETKT) are enriched in basic and acidic residues. Over residues 1073 to 1085 (SIPTTVGSLPSSK) the composition is skewed to polar residues. Serine 1100 is modified (phosphoserine). The disordered stretch occupies residues 1131-1164 (IPLNLDGPHPSPPTPDSVGQLHIMDYNETHHEHS). Residues 1155–1164 (DYNETHHEHS) are compositionally biased toward basic and acidic residues.

Component of the TSC-TBC complex (also named Rhebulator complex), composed of 2 molecules of TSC1, 2 molecules of TSC2 and 1 molecule of TBC1D7. Probably forms a complex composed of chaperones HSP90 and HSP70, co-chaperones STIP1/HOP, CDC37, PPP5C, PTGES3/p23, TSC1 and client protein TSC2. Forms a complex composed of chaperones HSP90 and HSP70, co-chaperones CDC37, PPP5C, TSC1 and client protein TSC2, CDK4, AKT, RAF1 and NR3C1; this complex does not contain co-chaperones STIP1/HOP and PTGES3/p23. Forms a complex containing HSP90AA1, TSC1 and TSC2; TSC1 is required to recruit TCS2 to the complex. Interacts (via C-terminus) with the closed form of HSP90AA1 (via the middle domain and TPR repeat-binding motif). Interacts with DOCK7. Interacts with FBXW5. Interacts with WDR45B. Interacts with RPAP3 and URI1. In terms of processing, phosphorylation at Ser-505 does not affect interaction with TSC2. 'Lys-63'-linked ubiquitinated at Lys-30 by PELI1; the ubiquitination promotes TSC1/TSC2 complex stability. In terms of tissue distribution, highly expressed in skeletal muscle, followed by heart, brain, placenta, pancreas, lung, liver and kidney. Also expressed in embryonic kidney cells.

Its subcellular location is the lysosome membrane. The protein localises to the cytoplasm. It localises to the cytosol. Its function is as follows. Non-catalytic component of the TSC-TBC complex, a multiprotein complex that acts as a negative regulator of the canonical mTORC1 complex, an evolutionarily conserved central nutrient sensor that stimulates anabolic reactions and macromolecule biosynthesis to promote cellular biomass generation and growth. The TSC-TBC complex acts as a GTPase-activating protein (GAP) for the small GTPase RHEB, a direct activator of the protein kinase activity of mTORC1. In absence of nutrients, the TSC-TBC complex inhibits mTORC1, thereby preventing phosphorylation of ribosomal protein S6 kinase (RPS6KB1 and RPS6KB2) and EIF4EBP1 (4E-BP1) by the mTORC1 signaling. The TSC-TBC complex is inactivated in response to nutrients, relieving inhibition of mTORC1. Within the TSC-TBC complex, TSC1 stabilizes TSC2 and prevents TSC2 self-aggregation. Acts as a tumor suppressor. Involved in microtubule-mediated protein transport via its ability to regulate mTORC1 signaling. Also acts as a co-chaperone for HSP90AA1 facilitating HSP90AA1 chaperoning of protein clients such as kinases, TSC2 and glucocorticoid receptor NR3C1. Increases ATP binding to HSP90AA1 and inhibits HSP90AA1 ATPase activity. Competes with the activating co-chaperone AHSA1 for binding to HSP90AA1, thereby providing a reciprocal regulatory mechanism for chaperoning of client proteins. Recruits TSC2 to HSP90AA1 and stabilizes TSC2 by preventing the interaction between TSC2 and ubiquitin ligase HERC1. The polypeptide is Hamartin (Homo sapiens (Human)).